The chain runs to 901 residues: Protein translocase subunit SecA (901 aa).

ATP-binding positions include Gln87, 105–109, and Asp512; that span reads GEGKT. The interval 855 to 891 is disordered; sequence QQLSHQDDETAAAAALAEQTGERKVGRNDPCPCGSGK. Zn(2+) contacts are provided by Cys885, Cys887, Cys896, and His897.

This sequence belongs to the SecA family. As to quaternary structure, monomer and homodimer. Part of the essential Sec protein translocation apparatus which comprises SecA, SecYEG and auxiliary proteins SecDF-YajC and YidC. Zn(2+) serves as cofactor.

It is found in the cell inner membrane. It localises to the cytoplasm. The enzyme catalyses ATP + H2O + cellular proteinSide 1 = ADP + phosphate + cellular proteinSide 2.. Its function is as follows. Part of the Sec protein translocase complex. Interacts with the SecYEG preprotein conducting channel. Has a central role in coupling the hydrolysis of ATP to the transfer of proteins into and across the cell membrane, serving both as a receptor for the preprotein-SecB complex and as an ATP-driven molecular motor driving the stepwise translocation of polypeptide chains across the membrane. This is Protein translocase subunit SecA from Cronobacter sakazakii (strain ATCC BAA-894) (Enterobacter sakazakii).